We begin with the raw amino-acid sequence, 273 residues long: Formamidopyrimidine-DNA glycosylase (273 aa).

The active-site Schiff-base intermediate with DNA is the proline 2. Glutamate 3 functions as the Proton donor in the catalytic mechanism. Lysine 59 (proton donor; for beta-elimination activity) is an active-site residue. 2 residues coordinate DNA: histidine 92 and arginine 111. The FPG-type zinc-finger motif lies at 239-273 (KVYGKTDEPCVVCGKPIEKIKLNGRGTHFCPNCQK). Arginine 263 acts as the Proton donor; for delta-elimination activity in catalysis.

The protein belongs to the FPG family. In terms of assembly, monomer. Zn(2+) is required as a cofactor.

The catalysed reaction is Hydrolysis of DNA containing ring-opened 7-methylguanine residues, releasing 2,6-diamino-4-hydroxy-5-(N-methyl)formamidopyrimidine.. The enzyme catalyses 2'-deoxyribonucleotide-(2'-deoxyribose 5'-phosphate)-2'-deoxyribonucleotide-DNA = a 3'-end 2'-deoxyribonucleotide-(2,3-dehydro-2,3-deoxyribose 5'-phosphate)-DNA + a 5'-end 5'-phospho-2'-deoxyribonucleoside-DNA + H(+). Involved in base excision repair of DNA damaged by oxidation or by mutagenic agents. Acts as a DNA glycosylase that recognizes and removes damaged bases. Has a preference for oxidized purines, such as 7,8-dihydro-8-oxoguanine (8-oxoG). Has AP (apurinic/apyrimidinic) lyase activity and introduces nicks in the DNA strand. Cleaves the DNA backbone by beta-delta elimination to generate a single-strand break at the site of the removed base with both 3'- and 5'-phosphates. This Listeria monocytogenes serotype 4b (strain F2365) protein is Formamidopyrimidine-DNA glycosylase.